Consider the following 256-residue polypeptide: Eukaryotic translation initiation factor 3 subunit J (256 aa).

2 stretches are compositionally biased toward acidic residues: residues 1 to 14 (MAEN…DFEP) and 35 to 54 (EGED…EEAE). Disordered regions lie at residues 1 to 109 (MAEN…SPEE) and 214 to 237 (QSKA…MKND). Basic and acidic residues predominate over residues 55-101 (AATKQEAQKTVEPKVSEKKKLLEKIREKEKLHKKRQEEVNQQEKEGT). A coiled-coil region spans residues 70 to 99 (SEKKKLLEKIREKEKLHKKRQEEVNQQEKE).

The protein belongs to the eIF-3 subunit J family. As to quaternary structure, component of the eukaryotic translation initiation factor 3 (eIF-3) complex, which is composed of 13 subunits: eif3a, eif3b, eif3c, eif3d, eif3e, eif3f, eif3g, eif3h, eif3i, eif3j, eif3k, eif3l and eif3m.

The protein resides in the cytoplasm. In terms of biological role, component of the eukaryotic translation initiation factor 3 (eIF-3) complex, which is involved in protein synthesis of a specialized repertoire of mRNAs and, together with other initiation factors, stimulates binding of mRNA and methionyl-tRNAi to the 40S ribosome. The eIF-3 complex specifically targets and initiates translation of a subset of mRNAs involved in cell proliferation. The chain is Eukaryotic translation initiation factor 3 subunit J (eif3j) from Xenopus tropicalis (Western clawed frog).